The sequence spans 335 residues: Fructose-1,6-bisphosphatase class 1 (335 aa).

Glu-92, Asp-114, Leu-116, and Asp-117 together coordinate Mg(2+). Residues 117–120 (DGSS), Asn-209, and Lys-275 contribute to the substrate site. Glu-281 contacts Mg(2+).

The protein belongs to the FBPase class 1 family. Homotetramer. It depends on Mg(2+) as a cofactor.

Its subcellular location is the cytoplasm. The catalysed reaction is beta-D-fructose 1,6-bisphosphate + H2O = beta-D-fructose 6-phosphate + phosphate. It functions in the pathway carbohydrate biosynthesis; gluconeogenesis. The protein is Fructose-1,6-bisphosphatase class 1 of Polaromonas sp. (strain JS666 / ATCC BAA-500).